A 575-amino-acid polypeptide reads, in one-letter code: MSRLDRSRYAALYGPTVGDRIRLADTDLFIEVTEDRSRGPAGTGTGDEAVFGGGKVIRESMGQSLATRAEGAPDLVITGAVVLDHWGVVKADVGIRDGRIVALGKAGNPDTMDGVHPELVMGPGTEIIAGNGKILTAGAVDCHVHLICPQQVPEALGAGITTLIGGGTGPAEGTKATTVTPGSWNLARMLSALDDWPVNVVLLGKGNTVSDESMWEQLRAGAAGFKLHEDWGTTPAAIDACLRVADAAGVQVALHSDTLNEAGFVEDTLAAIAGRAIHAYHTEGAGGGHAPDIITVAAAGNVLPSSTNPTRPHTVNTLDEHLDMLMVCHHLNPSVPEDLAFAESRIRPSTIAAEDILHDLGAISMIGSDSQAMGRIGEVVLRTWQTAHVMKLRRGSLAGDDRADNTRARRYIAKYTICPAVAHGLDAEIGSVEPGKLADLVLYDPAFFGVRPSLVLKGGFIAWAAMGDANASIPTPQPVLPRPMWGAARGPAAASSLIFVAPAAIEDGLPGRLGLATPVVPVADVRRRGKADLPENTATPDIRVDPDTFTVTVDGEAIEADPVSELPMTQRYFLF.

Residues 138–575 (GAVDCHVHLI…LPMTQRYFLF (438 aa)) enclose the Urease domain. Ni(2+) contacts are provided by H143, H145, and K226. K226 is subject to N6-carboxylysine. H228 provides a ligand contact to substrate. Residues H255 and H281 each contribute to the Ni(2+) site. Catalysis depends on H329, which acts as the Proton donor. D369 is a binding site for Ni(2+).

It belongs to the metallo-dependent hydrolases superfamily. Urease alpha subunit family. In terms of assembly, heterotrimer of UreA (gamma), UreB (beta) and UreC (alpha) subunits. Three heterotrimers associate to form the active enzyme. It depends on Ni cation as a cofactor. Post-translationally, carboxylation allows a single lysine to coordinate two nickel ions.

The protein localises to the cytoplasm. The catalysed reaction is urea + 2 H2O + H(+) = hydrogencarbonate + 2 NH4(+). It participates in nitrogen metabolism; urea degradation; CO(2) and NH(3) from urea (urease route): step 1/1. In Frankia casuarinae (strain DSM 45818 / CECT 9043 / HFP020203 / CcI3), this protein is Urease subunit alpha.